The primary structure comprises 393 residues: Short chain dehydrogenase sirQ (393 aa).

Residue leucine 54 coordinates NADP(+). Serine 233 serves as the catalytic Proton donor. Catalysis depends on lysine 259, which acts as the Lowers pKa of active site Tyr. Alanine 286 serves as a coordination point for NADP(+).

The protein belongs to the short-chain dehydrogenases/reductases (SDR) family. Highly divergent.

It participates in mycotoxin biosynthesis. Functionally, short chain dehydrogenase; part of the gene cluster that mediates the biosynthesis of sirodesmin PL, an epipolythiodioxopiperazine (ETP) characterized by a disulfide bridged cyclic dipeptide and that acts as a phytotoxin which is involved in the blackleg didease of canola. SirD catalyzes the O-prenylation of L-tyrosine (L-Tyr) in the presence of dimethylallyl diphosphate (DMAPP) to yield 4-O-dimethylallyl-L-Tyr, and therefore represents probably the first pathway-specific enzyme in the biosynthesis of sirodesmin PL. 4-O-dimethylallyl-L-Tyr, then undergoes condensation with L-Ser in a reaction catalyzed by the non-ribosomal peptide synthase sirP to form the diketopiperazine (DKP) backbone. Further bishydroxylation of the DKP performed by the cytochrome P450 monooxygenase sirC leads to the production of the intermediate phomamide. This step is essential to form the reactive thiol group required for toxicity of sirodesmin PL. The next steps of sirodesmin biosynthesis are not well understood yet, but some predictions could be made from intermediate compounds identification. Phomamide is converted into phomalizarine via oxidation, probably by sirT. Further oxidation, methylation (by sirM or sirN) and reduction steps convert phomalizarine to deacetyl sirodesmin. Finally, acetyltransferase sirH probably acetylates deacetyl sirodesmin to produce sirodesmin PL. In Leptosphaeria maculans (Blackleg fungus), this protein is Short chain dehydrogenase sirQ.